A 341-amino-acid polypeptide reads, in one-letter code: Killer cell immunoglobulin-like receptor 2DL3 (341 aa).

Positions M1–P21 are cleaved as a signal peptide. Topologically, residues H22–H245 are extracellular. 2 Ig-like C2-type domains span residues E42 to S107 and G142 to S205. 2 disulfides stabilise this stretch: C49–C100 and C149–C198. N-linked (GlcNAc...) asparagine glycosylation is found at N84, N178, and N211. The disordered stretch occupies residues V220–G239. Low complexity predominate over residues N223 to G239. Residues V246–L265 traverse the membrane as a helical segment. Residues H266–P341 lie on the Cytoplasmic side of the membrane.

It belongs to the immunoglobulin superfamily. In terms of assembly, interacts with ARRB2.

The protein localises to the cell membrane. Functionally, receptor on natural killer (NK) cells for HLA-C alleles (HLA-Cw1, HLA-Cw3 and HLA-Cw7). Inhibits the activity of NK cells thus preventing cell lysis. In Homo sapiens (Human), this protein is Killer cell immunoglobulin-like receptor 2DL3.